We begin with the raw amino-acid sequence, 428 residues long: Dual-specificity RNA methyltransferase RlmN (428 aa).

The segment covering 1–17 (MPLHRVEALGEPQDRTG) has biased composition (basic and acidic residues). Residues 1–44 (MPLHRVEALGEPQDRTGKTFSGRTNGPISSPLTDTERRMSIPQN) form a disordered region. The span at 18-33 (KTFSGRTNGPISSPLT) shows a compositional bias: polar residues. Glu-136 acts as the Proton acceptor in catalysis. Positions 142–381 (EDDRGALCVS…APIRMPRGRD (240 aa)) constitute a Radical SAM core domain. Residues Cys-149 and Cys-386 are joined by a disulfide bond. [4Fe-4S] cluster contacts are provided by Cys-156, Cys-160, and Cys-163. Residues 212–213 (GE), Ser-244, 266–268 (SLH), and Asn-343 contribute to the S-adenosyl-L-methionine site. Cys-386 acts as the S-methylcysteine intermediate in catalysis.

This sequence belongs to the radical SAM superfamily. RlmN family. Requires [4Fe-4S] cluster as cofactor.

It localises to the cytoplasm. It carries out the reaction adenosine(2503) in 23S rRNA + 2 reduced [2Fe-2S]-[ferredoxin] + 2 S-adenosyl-L-methionine = 2-methyladenosine(2503) in 23S rRNA + 5'-deoxyadenosine + L-methionine + 2 oxidized [2Fe-2S]-[ferredoxin] + S-adenosyl-L-homocysteine. The enzyme catalyses adenosine(37) in tRNA + 2 reduced [2Fe-2S]-[ferredoxin] + 2 S-adenosyl-L-methionine = 2-methyladenosine(37) in tRNA + 5'-deoxyadenosine + L-methionine + 2 oxidized [2Fe-2S]-[ferredoxin] + S-adenosyl-L-homocysteine. Functionally, specifically methylates position 2 of adenine 2503 in 23S rRNA and position 2 of adenine 37 in tRNAs. m2A2503 modification seems to play a crucial role in the proofreading step occurring at the peptidyl transferase center and thus would serve to optimize ribosomal fidelity. This chain is Dual-specificity RNA methyltransferase RlmN, found in Rhodospirillum rubrum (strain ATCC 11170 / ATH 1.1.1 / DSM 467 / LMG 4362 / NCIMB 8255 / S1).